The primary structure comprises 250 residues: Putative HTH-type transcriptional regulatory protein PAE1627 (250 aa).

The region spanning 129–183 is the HTH cro/C1-type domain; sequence LRAKRQQAGLSLGTLATNLGVTRETVYRYERGEIEAPLKIAEKLINMFGEDITKK. Positions 140-159 form a DNA-binding region, H-T-H motif; that stretch reads LGTLATNLGVTRETVYRYER.

The polypeptide is Putative HTH-type transcriptional regulatory protein PAE1627 (Pyrobaculum aerophilum (strain ATCC 51768 / DSM 7523 / JCM 9630 / CIP 104966 / NBRC 100827 / IM2)).